The primary structure comprises 422 residues: UDP-N-acetylglucosamine 1-carboxyvinyltransferase (422 aa).

23–24 (KN) serves as a coordination point for phosphoenolpyruvate. Position 92 (Arg92) interacts with UDP-N-acetyl-alpha-D-glucosamine. Cys116 acts as the Proton donor in catalysis. 2-(S-cysteinyl)pyruvic acid O-phosphothioketal is present on Cys116. UDP-N-acetyl-alpha-D-glucosamine is bound by residues 121 to 125 (RPVDL), 161 to 164 (KVSV), Asp306, and Ile328.

The protein belongs to the EPSP synthase family. MurA subfamily.

The protein resides in the cytoplasm. It catalyses the reaction phosphoenolpyruvate + UDP-N-acetyl-alpha-D-glucosamine = UDP-N-acetyl-3-O-(1-carboxyvinyl)-alpha-D-glucosamine + phosphate. The protein operates within cell wall biogenesis; peptidoglycan biosynthesis. Functionally, cell wall formation. Adds enolpyruvyl to UDP-N-acetylglucosamine. The protein is UDP-N-acetylglucosamine 1-carboxyvinyltransferase of Aliivibrio fischeri (strain ATCC 700601 / ES114) (Vibrio fischeri).